Reading from the N-terminus, the 476-residue chain is Bifunctional protein HldE (476 aa).

Residues 1–319 are ribokinase; it reads MKVSLPAFEK…EALALHHGES (319 aa). An ATP-binding site is contributed by 195–198; the sequence is NMSE. The active site involves Asp-264. Residues 345-476 are cytidylyltransferase; sequence MTNGCFDILH…AIIQNIMANQ (132 aa).

In the N-terminal section; belongs to the carbohydrate kinase PfkB family. This sequence in the C-terminal section; belongs to the cytidylyltransferase family. As to quaternary structure, homodimer.

The catalysed reaction is D-glycero-beta-D-manno-heptose 7-phosphate + ATP = D-glycero-beta-D-manno-heptose 1,7-bisphosphate + ADP + H(+). It carries out the reaction D-glycero-beta-D-manno-heptose 1-phosphate + ATP + H(+) = ADP-D-glycero-beta-D-manno-heptose + diphosphate. It functions in the pathway nucleotide-sugar biosynthesis; ADP-L-glycero-beta-D-manno-heptose biosynthesis; ADP-L-glycero-beta-D-manno-heptose from D-glycero-beta-D-manno-heptose 7-phosphate: step 1/4. Its pathway is nucleotide-sugar biosynthesis; ADP-L-glycero-beta-D-manno-heptose biosynthesis; ADP-L-glycero-beta-D-manno-heptose from D-glycero-beta-D-manno-heptose 7-phosphate: step 3/4. In terms of biological role, catalyzes the phosphorylation of D-glycero-D-manno-heptose 7-phosphate at the C-1 position to selectively form D-glycero-beta-D-manno-heptose-1,7-bisphosphate. Functionally, catalyzes the ADP transfer from ATP to D-glycero-beta-D-manno-heptose 1-phosphate, yielding ADP-D-glycero-beta-D-manno-heptose. This chain is Bifunctional protein HldE, found in Shewanella baltica (strain OS155 / ATCC BAA-1091).